Here is a 902-residue protein sequence, read N- to C-terminus: Desmocollin-2 (902 aa).

The first 27 residues, 1 to 27, serve as a signal peptide directing secretion; sequence MAAVGSMRSGSPAFGLGHLLTLAILAL. Positions 28–135 are excised as a propeptide; it reads ASDACKEVVL…TEKVLSRAKR (108 aa). Cadherin domains lie at 136-243, 244-355, 356-471, 472-579, and 580-694; these read RWAP…YPIF, TQKL…LPTF, TRTT…GPEC, IPPM…FIPK, and QTVV…RLGP. At 136–694 the chain is on the extracellular side; it reads RWAPIPCSML…TGYADVRLGP (559 aa). Asn166 is a glycosylation site (N-linked (GlcNAc...) asparagine). Residues Asn392, Asn546, and Asn629 are each glycosylated (N-linked (GlcNAc...) asparagine). A helical transmembrane segment spans residues 695–715; that stretch reads WAILAILLGIALLFCILFTLV. Over 716–902 the chain is Cytoplasmic; it reads CSVSRASKQQ…RTLAEVCAKR (187 aa). 3 positions are modified to phosphoserine: Ser865, Ser869, and Ser874.

As to quaternary structure, interacts with DSP, PKP2 and JUP. Interacts with DSG3; the interaction may limit the interaction of DSC3 with p38MAPK family members and therefore repress p38MAPK signaling activation. In terms of tissue distribution, expressed in intestinal epithelial cells (at protein level). Expressed in the heart. Expressed in tongue, bladder, stomach, liver, kidney, and lung.

The protein localises to the cell membrane. Its subcellular location is the cell junction. It localises to the desmosome. A component of desmosome cell-cell junctions which are required for positive regulation of cellular adhesion. Promotes timely incorporation of DSG2 into desmosome intercellular junctions and promotes interaction of desmosome cell junctions with intermediate filament cytokeratin, via modulation of DSP phosphorylation. Plays an important role in desmosome-mediated maintenance of intestinal epithelial cell intercellular adhesion strength and barrier function. Positively regulates wound healing of intestinal mucosa via promotion of epithelial cell migration, and also plays a role in mechanotransduction of force between intestinal epithelial cells and extracellular matrix. May contribute to epidermal cell positioning (stratification) by mediating differential adhesiveness between cells that express different isoforms. May promote p38MAPK signaling activation that facilitates keratinocyte migration. The chain is Desmocollin-2 (Dsc2) from Mus musculus (Mouse).